Here is a 125-residue protein sequence, read N- to C-terminus: MLEKLGFIALAGAAGTLARYWLSGLVYDVLGRDFPWGTAVVNILGCFLFGLVWEAGAERMLLRTEARAVLLTGFMGAFTTFSTFIFESGGLLEDHRYLALLANLGFQTILGFAALFAGLALGRLI.

4 helical membrane-spanning segments follow: residues 6-26 (GFIALAGAAGTLARYWLSGLV), 34-54 (FPWGTAVVNILGCFLFGLVWE), 68-88 (AVLLTGFMGAFTTFSTFIFES), and 98-118 (LALLANLGFQTILGFAALFAG). The Na(+) site is built by Gly76 and Thr79.

The protein belongs to the fluoride channel Fluc/FEX (TC 1.A.43) family.

The protein resides in the cell inner membrane. The catalysed reaction is fluoride(in) = fluoride(out). With respect to regulation, na(+) is not transported, but it plays an essential structural role and its presence is essential for fluoride channel function. Functionally, fluoride-specific ion channel. Important for reducing fluoride concentration in the cell, thus reducing its toxicity. In Solidesulfovibrio magneticus (strain ATCC 700980 / DSM 13731 / RS-1) (Desulfovibrio magneticus), this protein is Fluoride-specific ion channel FluC.